Reading from the N-terminus, the 510-residue chain is ATP synthase subunit alpha (510 aa).

Residue 169–176 (GDRQTGKT) participates in ATP binding.

This sequence belongs to the ATPase alpha/beta chains family. In terms of assembly, F-type ATPases have 2 components, CF(1) - the catalytic core - and CF(0) - the membrane proton channel. CF(1) has five subunits: alpha(3), beta(3), gamma(1), delta(1), epsilon(1). CF(0) has three main subunits: a(1), b(2) and c(9-12). The alpha and beta chains form an alternating ring which encloses part of the gamma chain. CF(1) is attached to CF(0) by a central stalk formed by the gamma and epsilon chains, while a peripheral stalk is formed by the delta and b chains.

It localises to the cell inner membrane. It carries out the reaction ATP + H2O + 4 H(+)(in) = ADP + phosphate + 5 H(+)(out). Its function is as follows. Produces ATP from ADP in the presence of a proton gradient across the membrane. The alpha chain is a regulatory subunit. The sequence is that of ATP synthase subunit alpha from Anaeromyxobacter dehalogenans (strain 2CP-1 / ATCC BAA-258).